Consider the following 73-residue polypeptide: uncharacterized protein (73 aa).

This sequence belongs to the ycf40 family.

It is found in the plastid. It localises to the chloroplast. This is an uncharacterized protein from Trieres chinensis (Marine centric diatom).